The sequence spans 208 residues: uncharacterized protein (208 aa).

Residues 1–16 form the signal peptide; that stretch reads MTRVALLTTGRELSQA. Disordered stretches follow at residues 1–95 and 145–176; these read MTRV…VRGQ and RVTK…SAAD. Low complexity predominate over residues 16 to 25; it reads AAPPARARTP. Basic and acidic residues predominate over residues 32 to 43; sequence RGERPDDGGHAP. Residues 44-54 show a composition bias toward basic residues; the sequence is HRDRRVNQRRR. Residues 55–95 show a composition bias toward basic and acidic residues; it reads QVGDRRAQRGVDEHPWRRPDERPNDHLPQRNSERPEGVRGQ. 2 stretches are compositionally biased toward polar residues: residues 148-158 and 167-176; these read KVSSSGPNSTP and GTNNAPSAAD.

This is an uncharacterized protein from Mycobacterium tuberculosis (strain CDC 1551 / Oshkosh).